Reading from the N-terminus, the 384-residue chain is Neuropeptide Y receptor type 2 (384 aa).

At 1–54 (MKMGPLGAEADENQTVEEMKVDQFGPGHTTLPGELAPDSEPELIDSTKLIEVQV) the chain is on the extracellular side. An N-linked (GlcNAc...) asparagine glycan is attached at asparagine 13. Residues 55–75 (VLILAYCSIILLGVIGNSLVI) form a helical membrane-spanning segment. The Cytoplasmic segment spans residues 76–89 (HVVIKFKSMRTVTN). A helical transmembrane segment spans residues 90 to 110 (FFIANLAVADLLVNTLCLPFT). The Extracellular portion of the chain corresponds to 111 to 127 (LTYTLMGEWKMGPVLCH). Cysteines 126 and 206 form a disulfide. Residues 128–148 (LVPYAQGLAVQVSTITLTVIA) traverse the membrane as a helical segment. Topologically, residues 149 to 168 (LDRHRCIVYHLESKISKQIS) are cytoplasmic. Residues 169 to 189 (FLIIGLAWGVSALLASPLAIF) traverse the membrane as a helical segment. Residues 190-219 (REYSLIEIIPDFEIVACTEKWPGEEKGIYG) lie on the Extracellular side of the membrane. The helical transmembrane segment at 220–240 (TIYSLSSLLILYVLPLGIISF) threads the bilayer. Residues 241–271 (SYTRIWSKLKNHVSPGAAHDHYHQRRQKTTK) are Cytoplasmic-facing. A helical membrane pass occupies residues 272–292 (MLVCVVVVFAVSWLPLHAFQL). At 293–307 (AVDIDSHVLDLKEYK) the chain is on the extracellular side. A helical transmembrane segment spans residues 308-328 (LIFTVFHIIAMCSTFANPLLY). The Cytoplasmic portion of the chain corresponds to 329–384 (GWMNSNYRKAFLSAFRCEQRLDAIHSEVSVTFKAKKHLQVTKNNGPNDSFTETTNV). Cysteine 345 carries S-palmitoyl cysteine lipidation.

The protein belongs to the G-protein coupled receptor 1 family.

The protein resides in the cell membrane. Functionally, receptor for neuropeptide Y and peptide YY. The chain is Neuropeptide Y receptor type 2 (NPY2R) from Bos taurus (Bovine).